Here is a 516-residue protein sequence, read N- to C-terminus: Acyl-lipid (7-3)-desaturase, chloroplastic (516 aa).

A disordered region spans residues 1–25 (MNATMQRSAVAGRTSGKVATTARAS). The transit peptide at 1–47 (MNATMQRSAVAGRTSGKVATTARASSMARPRLPIAGRVARRSAVTVR) directs the protein to the chloroplast. The region spanning 83–148 (WTVYRGVAYD…LADFPVDAVP (66 aa)) is the Cytochrome b5 heme-binding domain. His-100 and His-123 together coordinate heme. The next 2 membrane-spanning stretches (helical) occupy residues 186–206 (GAAF…TYDA) and 209–229 (LTGA…QHCG). Residues 227–231 (HCGNH) carry the Histidine box-1 motif. Residues 262 to 267 (HQVSHH) carry the Histidine box-2 motif. 4 helical membrane-spanning segments follow: residues 305-325 (MWAL…QALL), 354-374 (FLLY…GGAA), 375-395 (GYLF…HNVP), and 423-443 (VLTS…GLNL). Residues 444–448 (QIEHH) carry the Histidine box-3 motif.

This sequence belongs to the fatty acid desaturase type 1 family. It depends on Fe(2+) as a cofactor.

It is found in the plastid. The protein resides in the chloroplast membrane. It carries out the reaction a (7Z,10Z,13Z,16Z,19Z)-docosapentaenoyl-containing glycerolipid + 2 Fe(II)-[cytochrome b5] + O2 + 2 H(+) = a (4Z,7Z,10Z,13Z,16Z,19Z)-docosahexaenoyl-containing glycerolipid + 2 Fe(III)-[cytochrome b5] + 2 H2O. The enzyme catalyses a (7Z,10Z,13Z,16Z)-docosatetraenoyl-containing glycerolipid + 2 Fe(II)-[cytochrome b5] + O2 + 2 H(+) = a (4Z,7Z,10Z,13Z,16Z)-docosapentaenoyl-containing glycerolipid + 2 Fe(III)-[cytochrome b5] + 2 H2O. Its function is as follows. Fatty acid desaturase that introduces a cis double bond at the 4-position in 16-carbon polyunsaturated fatty acids that contain a Delta(7) double bond, resulting in the production of 16 carbon fatty acid (7Z,10Z,13Z)-hexadeca-7,10,13-trienoate. This chain is Acyl-lipid (7-3)-desaturase, chloroplastic, found in Chlamydomonas reinhardtii (Chlamydomonas smithii).